Consider the following 88-residue polypeptide: MGTARFLRAVLLLSVLLMVTFPALLSAEHHDGRVDICRLPSDSGDCLRFFEMWYFDGTTCTKFVYGGYGGNDNRFPTKKACMKRCAKA.

The first 27 residues, 1-27 (MGTARFLRAVLLLSVLLMVTFPALLSA), serve as a signal peptide directing secretion. Positions 28 to 33 (EHHDGR) are excised as a propeptide. Residues 37 to 85 (CRLPSDSGDCLRFFEMWYFDGTTCTKFVYGGYGGNDNRFPTKKACMKRC) form the BPTI/Kunitz inhibitor domain. Disulfide bonds link Cys37–Cys85 and Cys60–Cys81.

Belongs to the venom Kunitz-type family. 03 (sub-Kunitz) subfamily. As to expression, expressed by the venom gland.

The protein resides in the secreted. Serine protease inhibitor that inhibits trypsin at a molar ratio of 1:1. The sequence is that of Kunitz-type U15-theraphotoxin-Hhn1e from Cyriopagopus hainanus (Chinese bird spider).